A 257-amino-acid chain; its full sequence is UPF0246 protein AHA_3667 (257 aa).

The protein belongs to the UPF0246 family.

The protein is UPF0246 protein AHA_3667 of Aeromonas hydrophila subsp. hydrophila (strain ATCC 7966 / DSM 30187 / BCRC 13018 / CCUG 14551 / JCM 1027 / KCTC 2358 / NCIMB 9240 / NCTC 8049).